A 440-amino-acid chain; its full sequence is Chromosome partition protein MukF (440 aa).

The segment at 208-236 (LSETSGTLRELQDTLEAAGDKLQANLLQI) is leucine-zipper.

Belongs to the MukF family. As to quaternary structure, interacts, and probably forms a ternary complex, with MukE and MukB via its C-terminal region. The complex formation is stimulated by calcium or magnesium. It is required for an interaction between MukE and MukB.

It is found in the cytoplasm. It localises to the nucleoid. Involved in chromosome condensation, segregation and cell cycle progression. May participate in facilitating chromosome segregation by condensation DNA from both sides of a centrally located replisome during cell division. Not required for mini-F plasmid partitioning. Probably acts via its interaction with MukB and MukE. Overexpression results in anucleate cells. It has a calcium binding activity. This Cronobacter sakazakii (strain ATCC BAA-894) (Enterobacter sakazakii) protein is Chromosome partition protein MukF.